The chain runs to 248 residues: MAGHSQFKNIMHRKGRVDAVRSKVFSKLAREITVAAKLGTPDPSMNPRLRAAILAARAENMPKDNIERAIKKAVGGDGENYEEIRYEGYGPGGAALIVEAQTDNRNRTASDVRSAFTKSGGSLAETGAVAFMFDRVGVIAFAPDVADADTMLEAAIEAGADDVRSDTEGHEVICAQDAYGDVSKALEGRFGEPRRTGLIWKAQNTIDVDDETGEKLIRLVEVIEDQDDVQNVYVNFALSEALVEKMGA.

Belongs to the TACO1 family.

Its subcellular location is the cytoplasm. The chain is Probable transcriptional regulatory protein Mchl_0946 from Methylorubrum extorquens (strain CM4 / NCIMB 13688) (Methylobacterium extorquens).